The following is a 342-amino-acid chain: MTVKGKRITVHDMTLRDGMHPKRHQMTLDQMKAVATGLDAAGVPLIEVTHGDGLGGASVNYGFPAHTDEEYLGTVIPLLKLAKVSALLIPGIGTVDHLRMAKDLGVHTIRVATHCTEADVSEQHISLARQLEMDTVGFLMMAHKADSQRLISQARLMESYGANCIYITDSAGYMLPAEVKEKTSAVRAALRPETELGFHGHHNLAMGVANSVVAVESGATRIDAAAAGLGAGAGNTPMEVFIAVCNRMGIATGVDLFKMQDVAEDIVVPMMDHPIRIDRDALILGYAGVYSSFLLFAKRAEKKYGVSAREILIELGRRGMVGGQEDMIEDAAMTMAKARGPI.

In terms of domain architecture, Pyruvate carboxyltransferase spans 8–260 (ITVHDMTLRD…ATGVDLFKMQ (253 aa)). 16–17 (RD) is a binding site for substrate. Aspartate 17 contributes to the Mn(2+) binding site. Histidine 20 acts as the Proton acceptor in catalysis. Substrate-binding residues include serine 170 and histidine 199. The Mn(2+) site is built by histidine 199 and histidine 201. Tyrosine 290 is a substrate binding site.

The protein belongs to the 4-hydroxy-2-oxovalerate aldolase family.

The catalysed reaction is (S)-4-hydroxy-2-oxopentanoate = acetaldehyde + pyruvate. This Albidiferax ferrireducens (strain ATCC BAA-621 / DSM 15236 / T118) (Rhodoferax ferrireducens) protein is 4-hydroxy-2-oxovalerate aldolase.